Consider the following 195-residue polypeptide: Imidazoleglycerol-phosphate dehydratase (195 aa).

Belongs to the imidazoleglycerol-phosphate dehydratase family.

The protein resides in the cytoplasm. The enzyme catalyses D-erythro-1-(imidazol-4-yl)glycerol 3-phosphate = 3-(imidazol-4-yl)-2-oxopropyl phosphate + H2O. It functions in the pathway amino-acid biosynthesis; L-histidine biosynthesis; L-histidine from 5-phospho-alpha-D-ribose 1-diphosphate: step 6/9. The polypeptide is Imidazoleglycerol-phosphate dehydratase (Frankia casuarinae (strain DSM 45818 / CECT 9043 / HFP020203 / CcI3)).